Consider the following 214-residue polypeptide: Orotidine 5'-phosphate decarboxylase (214 aa).

Residues D11, K33, 59–68 (DFKIADIPNT), S114, 164–174 (PGIGSQGGRAS), G187, and R188 contribute to the substrate site. K61 acts as the Proton donor in catalysis.

Belongs to the OMP decarboxylase family. Type 1 subfamily. In terms of assembly, homodimer.

The catalysed reaction is orotidine 5'-phosphate + H(+) = UMP + CO2. The protein operates within pyrimidine metabolism; UMP biosynthesis via de novo pathway; UMP from orotate: step 2/2. Its function is as follows. Catalyzes the decarboxylation of orotidine 5'-monophosphate (OMP) to uridine 5'-monophosphate (UMP). The chain is Orotidine 5'-phosphate decarboxylase from Thermoplasma acidophilum (strain ATCC 25905 / DSM 1728 / JCM 9062 / NBRC 15155 / AMRC-C165).